A 405-amino-acid chain; its full sequence is Accessory Sec system protein translocase subunit SecY2 (405 aa).

Helical transmembrane passes span L14–V34, L63–F83, M104–V124, I131–L151, A156–P176, G191–Y211, M247–F267, P285–V305, F343–L363, and L368–I388.

This sequence belongs to the SecY/SEC61-alpha family. SecY2 subfamily. In terms of assembly, component of the accessory SecA2/SecY2 protein translocase complex required to export cell wall proteins. May form heterotrimers with SecE and SecG subunits.

Its subcellular location is the cell membrane. In terms of biological role, part of the accessory SecA2/SecY2 system specifically required for export of possible cell wall proteins. The central subunit of a protein translocation channel. In Streptococcus pneumoniae (strain CGSP14), this protein is Accessory Sec system protein translocase subunit SecY2.